Reading from the N-terminus, the 223-residue chain is Cutinase (223 aa).

An N-terminal signal peptide occupies residues 1-19; that stretch reads MKFFAFSMLIGEASPIVLA. The cysteines at positions 46 and 124 are disulfide-linked. The active-site Nucleophile is serine 135. Residues cysteine 185 and cysteine 192 are joined by a disulfide bond. Aspartate 189 is a catalytic residue. Histidine 202 functions as the Proton donor/acceptor in the catalytic mechanism.

It belongs to the cutinase family. Post-translationally, the 2 disulfide bonds play a critical role in holding the catalytic residues in juxta-position; reduction of the disulfide bridges results in the complete inactivation of the enzyme.

It is found in the secreted. It catalyses the reaction cutin + H2O = cutin monomers.. Its function is as follows. Catalyzes the hydrolysis of complex carboxylic polyesters found in the cell wall of plants. Degrades cutin, a macromolecule that forms the structure of the plant cuticle. Allows pathogenic fungi to penetrate through the cuticular barrier into the host plant during the initial stage of fungal infection. In Didymella rabiei (Chickpea ascochyta blight fungus), this protein is Cutinase (CUT).